The primary structure comprises 90 residues: Small ribosomal subunit protein uS17 (90 aa).

This sequence belongs to the universal ribosomal protein uS17 family. In terms of assembly, part of the 30S ribosomal subunit.

Its function is as follows. One of the primary rRNA binding proteins, it binds specifically to the 5'-end of 16S ribosomal RNA. The protein is Small ribosomal subunit protein uS17 of Gluconobacter oxydans (strain 621H) (Gluconobacter suboxydans).